We begin with the raw amino-acid sequence, 422 residues long: Serpin A11 (422 aa).

The N-terminal stretch at 1–24 (MGPVWLWLLIAELLLPVHYQPSSA) is a signal peptide. Residues 25-45 (HGDKSLGAPQPASHQSLEPAP) form a disordered region. Residues N106, N169, N350, and N385 are each glycosylated (N-linked (GlcNAc...) asparagine).

The protein belongs to the serpin family.

The protein resides in the secreted. This chain is Serpin A11 (Serpina11), found in Rattus norvegicus (Rat).